The sequence spans 97 residues: Large ribosomal subunit protein bL21 (97 aa).

The protein belongs to the bacterial ribosomal protein bL21 family. As to quaternary structure, part of the 50S ribosomal subunit. Contacts protein L20.

This protein binds to 23S rRNA in the presence of protein L20. This is Large ribosomal subunit protein bL21 from Persephonella marina (strain DSM 14350 / EX-H1).